The chain runs to 282 residues: Nucleotide-binding protein Ping_2894 (282 aa).

Residue 8–15 (GRSGSGKT) coordinates ATP. 56 to 59 (DIRN) contacts GTP.

This sequence belongs to the RapZ-like family.

Displays ATPase and GTPase activities. The chain is Nucleotide-binding protein Ping_2894 from Psychromonas ingrahamii (strain DSM 17664 / CCUG 51855 / 37).